The primary structure comprises 663 residues: ATP-dependent RNA helicase DBP6 (663 aa).

2 disordered regions span residues 1–119 and 153–200; these read MFGV…DAME and VHSS…LNSS. Composition is skewed to acidic residues over residues 39–79 and 88–101; these read VVDD…NSEG and SESE…SESD. Basic and acidic residues-rich tracts occupy residues 102-111 and 168-177; these read VDGKHMKEEL and GSREKEKEEV. A Q motif motif is present at residues 222–250; sequence KPFSEFPLSPFMHENLESLGFENAFAVQV. Positions 264-448 constitute a Helicase ATP-binding domain; that stretch reads KLRPDAFGDV…SLDFHNPRLL (185 aa). Residue 277–284 participates in ATP binding; that stretch reads ASTGSGKT. A DEAD box motif is present at residues 384-387; the sequence is DEAD. The Helicase C-terminal domain maps to 485–642; it reads ILAKFLIAQE…DVEVNLKQLI (158 aa).

This sequence belongs to the DEAD box helicase family. DDX51/DBP6 subfamily. In terms of assembly, associated with pre-ribosomal particles.

It localises to the nucleus. Its subcellular location is the nucleolus. The catalysed reaction is ATP + H2O = ADP + phosphate + H(+). ATP-binding RNA helicase involved in the biogenesis of 60S ribosomal subunits and is required for the normal formation of 25S and 5.8S rRNAs. In Lodderomyces elongisporus (strain ATCC 11503 / CBS 2605 / JCM 1781 / NBRC 1676 / NRRL YB-4239) (Yeast), this protein is ATP-dependent RNA helicase DBP6 (DBP6).